Reading from the N-terminus, the 471-residue chain is Regulator of microtubule dynamics protein 3 (471 aa).

The Mitochondrial intermembrane portion of the chain corresponds to 1–9 (MSSLGTLGG). Residues 10–32 (ARAGLGLLLGTAAGLGFLCALYS) traverse the membrane as a helical segment. Topologically, residues 33–471 (QRWKRTQRRG…LEELEVILGE (439 aa)) are cytoplasmic. The disordered stretch occupies residues 39–70 (QRRGQSQSQSNSLDYTQTSEPGRQVRPLRAAP). Over residues 41–50 (RGQSQSQSNS) the composition is skewed to low complexity. Ser44, Ser46, Ser50, and Ser57 each carry phosphoserine. Residues 90-123 (LDRLEFVLTSLVALRREVEELRSSLQGLAGQIVG) adopt a coiled-coil conformation. Positions 156 to 162 (VYFTAAS) match the FFAT motif. Thr159 is modified (phosphothreonine). Positions 169 to 206 (AESEGGYTTANAESDYERDSERESDGDGEDEVSCETVK) are disordered. A phosphoserine mark is found at Ser182, Ser192, Ser212, and Ser233. Basic and acidic residues predominate over residues 183–193 (DYERDSERESD).

This sequence belongs to the RMDN family. Interacts with PTPN2. Interacts with microtubules. Interacts with VAPB. Interacts (via FFAT motif) with MOSPD2 (via MSP domain). Interacts (via phosphorylated FFAT motif) with MOSPD2, VAPA and VAPB. In terms of processing, phosphorylation at Thr-160 of the FFAT motif activates interaction with MOSPD2, VAPA and VAPB.

It is found in the mitochondrion outer membrane. The protein localises to the cytoplasm. The protein resides in the nucleus. It localises to the cytoskeleton. Its subcellular location is the spindle. It is found in the spindle pole. Functionally, involved in cellular calcium homeostasis regulation. May participate in differentiation and apoptosis of keratinocytes. Overexpression induces apoptosis. This is Regulator of microtubule dynamics protein 3 from Bos taurus (Bovine).